A 365-amino-acid chain; its full sequence is tRNA 2-selenouridine synthase (365 aa).

Residues 15-138 (LVSDHPIMDA…MRQFLIETID (124 aa)) form the Rhodanese domain. The active-site S-selanylcysteine intermediate is Cys-98.

The protein belongs to the SelU family. Monomer.

The enzyme catalyses 5-methylaminomethyl-2-thiouridine(34) in tRNA + selenophosphate + (2E)-geranyl diphosphate + H2O + H(+) = 5-methylaminomethyl-2-selenouridine(34) in tRNA + (2E)-thiogeraniol + phosphate + diphosphate. It carries out the reaction 5-methylaminomethyl-2-thiouridine(34) in tRNA + (2E)-geranyl diphosphate = 5-methylaminomethyl-S-(2E)-geranyl-thiouridine(34) in tRNA + diphosphate. The catalysed reaction is 5-methylaminomethyl-S-(2E)-geranyl-thiouridine(34) in tRNA + selenophosphate + H(+) = 5-methylaminomethyl-2-(Se-phospho)selenouridine(34) in tRNA + (2E)-thiogeraniol. It catalyses the reaction 5-methylaminomethyl-2-(Se-phospho)selenouridine(34) in tRNA + H2O = 5-methylaminomethyl-2-selenouridine(34) in tRNA + phosphate. Its function is as follows. Involved in the post-transcriptional modification of the uridine at the wobble position (U34) of tRNA(Lys), tRNA(Glu) and tRNA(Gln). Catalyzes the conversion of 2-thiouridine (S2U-RNA) to 2-selenouridine (Se2U-RNA). Acts in a two-step process involving geranylation of 2-thiouridine (S2U) to S-geranyl-2-thiouridine (geS2U) and subsequent selenation of the latter derivative to 2-selenouridine (Se2U) in the tRNA chain. This chain is tRNA 2-selenouridine synthase, found in Shewanella piezotolerans (strain WP3 / JCM 13877).